Reading from the N-terminus, the 158-residue chain is Transmembrane protein 50B (158 aa).

Alanine 2 is subject to N-acetylalanine. A run of 4 helical transmembrane segments spans residues valine 28 to tyrosine 48, histidine 56 to serine 76, tryptophan 98 to phenylalanine 118, and valine 128 to tyrosine 148.

This sequence belongs to the UPF0220 family. In terms of assembly, may form homotrimers or homodimers.

The protein resides in the endoplasmic reticulum membrane. It is found in the golgi apparatus membrane. The protein is Transmembrane protein 50B (TMEM50B) of Bos taurus (Bovine).